Reading from the N-terminus, the 439-residue chain is tRNA-2-methylthio-N(6)-dimethylallyladenosine synthase (439 aa).

An MTTase N-terminal domain is found at 2-119 (KYIYIKTWGC…LAQMIDKVEK (118 aa)). The [4Fe-4S] cluster site is built by C11, C48, C82, C156, C160, and C163. The region spanning 142–374 (KKTGYTASIS…QNCINKQTMS (233 aa)) is the Radical SAM core domain. Residues 377–439 (RKMLKSTQSV…HTHSLQGELI (63 aa)) form the TRAM domain.

This sequence belongs to the methylthiotransferase family. MiaB subfamily. In terms of assembly, monomer. [4Fe-4S] cluster is required as a cofactor.

It is found in the cytoplasm. The enzyme catalyses N(6)-dimethylallyladenosine(37) in tRNA + (sulfur carrier)-SH + AH2 + 2 S-adenosyl-L-methionine = 2-methylsulfanyl-N(6)-dimethylallyladenosine(37) in tRNA + (sulfur carrier)-H + 5'-deoxyadenosine + L-methionine + A + S-adenosyl-L-homocysteine + 2 H(+). In terms of biological role, catalyzes the methylthiolation of N6-(dimethylallyl)adenosine (i(6)A), leading to the formation of 2-methylthio-N6-(dimethylallyl)adenosine (ms(2)i(6)A) at position 37 in tRNAs that read codons beginning with uridine. This Buchnera aphidicola subsp. Schizaphis graminum (strain Sg) protein is tRNA-2-methylthio-N(6)-dimethylallyladenosine synthase.